The chain runs to 123 residues: Large ribosomal subunit protein uL18 (123 aa).

Belongs to the universal ribosomal protein uL18 family. Part of the 50S ribosomal subunit; part of the 5S rRNA/L5/L18/L25 subcomplex. Contacts the 5S and 23S rRNAs.

Functionally, this is one of the proteins that bind and probably mediate the attachment of the 5S RNA into the large ribosomal subunit, where it forms part of the central protuberance. This Chlamydia trachomatis serovar A (strain ATCC VR-571B / DSM 19440 / HAR-13) protein is Large ribosomal subunit protein uL18.